A 423-amino-acid chain; its full sequence is uncharacterized protein (423 aa).

The first 16 residues, 1 to 16, serve as a signal peptide directing secretion; it reads MKSRIFFITLLTIVAA. Over 17–402 the chain is Extracellular; it reads QESADQLCSS…SSSAKEEQTS (386 aa). Disulfide bonds link C24/C217, C33/C43, C36/C68, C46/C57, C219/C238, C230/C241, C243/C252, C254/C288, C271/C286, C280/C291, C293/C303, C305/C327, C310/C325, C319/C330, C332/C341, and C343/C350. N-linked (GlcNAc...) asparagine glycosylation occurs at N65. Residues 215–350 are cysteine-rich tandem repeats; sequence CGCECEKHPE…CSCSTASNNC (136 aa). I-EGF domains follow at residues 219 to 253, 254 to 304, and 305 to 342; these read CEKHPEINSRLCHQNGHLVCGQCVCDQSRGGDKCE, CPLA…KFCQ, and CDNDSCPLAVNGKVCSGNGVCDCGVCKCEMGWERDDCS. An N-linked (GlcNAc...) asparagine glycan is attached at N274. N307 carries N-linked (GlcNAc...) asparagine glycosylation. A disordered region spans residues 354 to 406; sequence GTPAPEEKDKPESVPEEPEATEKPDDMPSDSDLEKELDESSSAKEEQTSSSGV. The span at 380–392 shows a compositional bias: acidic residues; it reads MPSDSDLEKELDE. The chain crosses the membrane as a helical span at residues 403–421; that stretch reads SSGVVSRVCVLLTFFLLVL. Topologically, residues 422 to 423 are cytoplasmic; the sequence is NF.

It belongs to the integrin beta chain family.

It localises to the membrane. This is an uncharacterized protein from Caenorhabditis elegans.